Here is a 183-residue protein sequence, read N- to C-terminus: Translation initiation factor IF-3 (183 aa).

This sequence belongs to the IF-3 family. In terms of assembly, monomer.

Its subcellular location is the cytoplasm. IF-3 binds to the 30S ribosomal subunit and shifts the equilibrium between 70S ribosomes and their 50S and 30S subunits in favor of the free subunits, thus enhancing the availability of 30S subunits on which protein synthesis initiation begins. This Pseudomonas putida (strain ATCC 700007 / DSM 6899 / JCM 31910 / BCRC 17059 / LMG 24140 / F1) protein is Translation initiation factor IF-3.